We begin with the raw amino-acid sequence, 280 residues long: MAAGSGSGSNPKDYQDPPPAPLVDTGELGKWSLYRAAIAEFTATLLLVCISVSTVIGEKRQSGEGGAGVLGIAWAFGGLIFVLVYCTAGISGGHMNPAVTFAMVLARRVSLPRAALYTMAQCVGAVCGAGLARAMHGGGQYARHGGGANELAAGYSAGAGVVAEMVGTFVLVYTVFSATDPKRKARDSHVPVLAPLPIGLAVLVVHLATIPITGTGINPARSLGPALVLGLGTTKAWSHLWIFWVGPFAGAAAAMIYHHYILRGAAAKAFASSSYRSPHF.

The segment at 1–21 is disordered; that stretch reads MAAGSGSGSNPKDYQDPPPAP. The next 2 membrane-spanning stretches (helical) occupy residues 36 to 56 and 70 to 92; these read AAIA…STVI and LGIA…GISG. The NPA 1 motif lies at 96-98; sequence NPA. 3 helical membrane passes run 113 to 135, 156 to 176, and 192 to 212; these read RAAL…ARAM, SAGA…YTVF, and VLAP…TIPI. Residues 218–220 carry the NPA 2 motif; the sequence is NPA. The helical transmembrane segment at 236 to 256 threads the bilayer; the sequence is AWSHLWIFWVGPFAGAAAAMI.

This sequence belongs to the MIP/aquaporin (TC 1.A.8) family. PIP (TC 1.A.8.11) subfamily. In terms of tissue distribution, expressed in leaves and at lower levels in roots.

The protein localises to the cell membrane. In terms of biological role, aquaporins facilitate the transport of water and small neutral solutes across cell membranes. The protein is Probable aquaporin PIP2-8 (PIP2-8) of Oryza sativa subsp. japonica (Rice).